Reading from the N-terminus, the 264-residue chain is Thiazole synthase (264 aa).

Lysine 106 acts as the Schiff-base intermediate with DXP in catalysis. Residues glycine 167, 193 to 194, and 215 to 216 contribute to the 1-deoxy-D-xylulose 5-phosphate site; these read AG and NS.

The protein belongs to the ThiG family. In terms of assembly, homotetramer. Forms heterodimers with either ThiH or ThiS.

The protein resides in the cytoplasm. The catalysed reaction is [ThiS sulfur-carrier protein]-C-terminal-Gly-aminoethanethioate + 2-iminoacetate + 1-deoxy-D-xylulose 5-phosphate = [ThiS sulfur-carrier protein]-C-terminal Gly-Gly + 2-[(2R,5Z)-2-carboxy-4-methylthiazol-5(2H)-ylidene]ethyl phosphate + 2 H2O + H(+). It functions in the pathway cofactor biosynthesis; thiamine diphosphate biosynthesis. Its function is as follows. Catalyzes the rearrangement of 1-deoxy-D-xylulose 5-phosphate (DXP) to produce the thiazole phosphate moiety of thiamine. Sulfur is provided by the thiocarboxylate moiety of the carrier protein ThiS. In vitro, sulfur can be provided by H(2)S. In Azotobacter vinelandii (strain DJ / ATCC BAA-1303), this protein is Thiazole synthase.